A 122-amino-acid polypeptide reads, in one-letter code: Small ribosomal subunit protein uS13 (122 aa).

Residues 94–122 (GLPVRGQVTQKNARTRKGPRKTVAGKKGK) form a disordered region. The span at 106 to 122 (ARTRKGPRKTVAGKKGK) shows a compositional bias: basic residues.

It belongs to the universal ribosomal protein uS13 family. Part of the 30S ribosomal subunit. Forms a loose heterodimer with protein S19. Forms two bridges to the 50S subunit in the 70S ribosome.

Its function is as follows. Located at the top of the head of the 30S subunit, it contacts several helices of the 16S rRNA. In the 70S ribosome it contacts the 23S rRNA (bridge B1a) and protein L5 of the 50S subunit (bridge B1b), connecting the 2 subunits; these bridges are implicated in subunit movement. Contacts the tRNAs in the A and P-sites. In Mycoplasma mobile (strain ATCC 43663 / 163K / NCTC 11711) (Mesomycoplasma mobile), this protein is Small ribosomal subunit protein uS13.